Consider the following 301-residue polypeptide: Probable alpha-L-glutamate ligase 1 (301 aa).

The ATP-grasp domain maps to 104-287; it reads MQLMSRRGIG…VAGAIIAFIE (184 aa). ATP is bound by residues K141, 178–179, D187, and 211–213; these read EY and RSN. 3 residues coordinate Mg(2+): D248, E260, and N262. Residues D248, E260, and N262 each coordinate Mn(2+).

It belongs to the RimK family. Mg(2+) serves as cofactor. Requires Mn(2+) as cofactor.

This is Probable alpha-L-glutamate ligase 1 from Shewanella amazonensis (strain ATCC BAA-1098 / SB2B).